The sequence spans 167 residues: Schlafen-like protein (167 aa).

This sequence belongs to the Schlafen family. Subgroup poxviridae B3 subfamily.

This Bos taurus (Bovine) protein is Schlafen-like protein.